Consider the following 313-residue polypeptide: Ribosomal RNA small subunit methyltransferase H (313 aa).

S-adenosyl-L-methionine is bound by residues 33-35 (GGH), Asp53, Phe80, Asp101, and Gln108. A disordered region spans residues 282 to 313 (LVHNKPLTPSEAEIEQNPRARSAKLRVAQKLA).

It belongs to the methyltransferase superfamily. RsmH family.

It localises to the cytoplasm. The enzyme catalyses cytidine(1402) in 16S rRNA + S-adenosyl-L-methionine = N(4)-methylcytidine(1402) in 16S rRNA + S-adenosyl-L-homocysteine + H(+). Specifically methylates the N4 position of cytidine in position 1402 (C1402) of 16S rRNA. The protein is Ribosomal RNA small subunit methyltransferase H of Magnetococcus marinus (strain ATCC BAA-1437 / JCM 17883 / MC-1).